We begin with the raw amino-acid sequence, 964 residues long: Protein translocase subunit SecA (964 aa).

ATP contacts are provided by residues glutamine 86, 104–108 (GEGKT), and aspartate 494. The interval 846–964 (ETAESADTIA…YKMCHGQNEA (119 aa)) is disordered. A compositionally biased stretch (acidic residues) spans 871–882 (AEGEVEEEDEDT). Low complexity predominate over residues 887–900 (AIAESAAASEAGES). Cysteine 947, cysteine 949, cysteine 958, and histidine 959 together coordinate Zn(2+).

The protein belongs to the SecA family. As to quaternary structure, monomer and homodimer. Part of the essential Sec protein translocation apparatus which comprises SecA, SecYEG and auxiliary proteins SecDF. Other proteins may also be involved. Requires Zn(2+) as cofactor.

The protein localises to the cell membrane. The protein resides in the cytoplasm. The catalysed reaction is ATP + H2O + cellular proteinSide 1 = ADP + phosphate + cellular proteinSide 2.. Part of the Sec protein translocase complex. Interacts with the SecYEG preprotein conducting channel. Has a central role in coupling the hydrolysis of ATP to the transfer of proteins into and across the cell membrane, serving as an ATP-driven molecular motor driving the stepwise translocation of polypeptide chains across the membrane. This Bifidobacterium longum subsp. infantis (strain ATCC 15697 / DSM 20088 / JCM 1222 / NCTC 11817 / S12) protein is Protein translocase subunit SecA.